The primary structure comprises 269 residues: Large ribosomal subunit protein uL3m (269 aa).

A mitochondrion-targeting transit peptide spans 1-19 (MSKFLQGSIFSISKLHVRY).

It belongs to the universal ribosomal protein uL3 family. In terms of assembly, component of the mitochondrial large ribosomal subunit (mt-LSU). Mature yeast 74S mitochondrial ribosomes consist of a small (37S) and a large (54S) subunit. The 37S small subunit contains a 15S ribosomal RNA (15S mt-rRNA) and 34 different proteins. The 54S large subunit contains a 21S rRNA (21S mt-rRNA) and 46 different proteins.

The protein localises to the mitochondrion. In terms of biological role, component of the mitochondrial ribosome (mitoribosome), a dedicated translation machinery responsible for the synthesis of mitochondrial genome-encoded proteins, including at least some of the essential transmembrane subunits of the mitochondrial respiratory chain. The mitoribosomes are attached to the mitochondrial inner membrane and translation products are cotranslationally integrated into the membrane. This chain is Large ribosomal subunit protein uL3m (MRPL9), found in Saccharomyces cerevisiae (strain ATCC 204508 / S288c) (Baker's yeast).